A 1043-amino-acid chain; its full sequence is Non-canonical nonribosomal peptide synthetase cpsA (1043 aa).

Residues 41-386 (RRAQENPSAP…IGGDGVSPGY (346 aa)) are adenylation (A) domain. A Carrier domain is found at 549–626 (QDASTTISRL…QMARYVDEGG (78 aa)). At Ser-586 the chain carries O-(pantetheine 4'-phosphoryl)serine. Residues 671 to 914 (MTGATGFVGA…FVPVDYLVDA (244 aa)) form a short-chain dehydrogenase/reductase (R) domain region. Positions 672–915 (TGATGFVGAF…VPVDYLVDAI (244 aa)) constitute a Thioester reductase (TE) domain.

The protein belongs to the NRP synthetase family. The cofactor is pantetheine 4'-phosphate.

The enzyme catalyses L-valine + ATP + NADPH + H(+) = L-valinal + AMP + diphosphate + NADP(+). It catalyses the reaction L-tryptophan + ATP + NADPH + H(+) = L-tryptophanal + AMP + diphosphate + NADP(+). It functions in the pathway alkaloid biosynthesis. Its function is as follows. Non-canonical nonribosomal peptide synthetase; part of the gene cluster that mediates the biosynthesis of campesine G, a dimeric indole piperazine alkaloid that shows good insecticidal activity Galleria mellonella. CpsA catalyzes the first steps of the pathway by producing L-tryptophanal and L-valinal from their respective amino-acids. These products condensate spontaneously to form trypyl-valyl pyrazine also known as didehydrocampesine A. The NmrA-like family domain-containing oxidoreductase cpsB is the next enzyme in cps pathway and reduces the unstable didehydrocampesine A to campesine A. The methyltransferase cpsF and the acetyltransferase cpsE both recognize N13 of piperazine ring to carry out methylation and acetylation of campesine A to produce campesine C and B, respectively. The cytochrome P450 monooxygenase cpsD then acts as a dimerase that catalyzes oxidative heterocoupling between campesine B and C to produce heterodimers with unexpected 6/5/6/6/6/6/5/6 eight-ring scaffold called campesine D. Finally,the cytochrome P450 monooxygenase cpsC is a regioselective dehydrogenase that catalyzes dehydrogenation reaction towards C2-N1 to produce campesine G. This is Non-canonical nonribosomal peptide synthetase cpsA from Aspergillus campestris (strain IBT 28561).